Consider the following 151-residue polypeptide: D-aminoacyl-tRNA deacylase (151 aa).

Residues 142–143 carry the Gly-cisPro motif, important for rejection of L-amino acids motif; it reads GP.

The protein belongs to the DTD family. In terms of assembly, homodimer.

Its subcellular location is the cytoplasm. The catalysed reaction is glycyl-tRNA(Ala) + H2O = tRNA(Ala) + glycine + H(+). It catalyses the reaction a D-aminoacyl-tRNA + H2O = a tRNA + a D-alpha-amino acid + H(+). An aminoacyl-tRNA editing enzyme that deacylates mischarged D-aminoacyl-tRNAs. Also deacylates mischarged glycyl-tRNA(Ala), protecting cells against glycine mischarging by AlaRS. Acts via tRNA-based rather than protein-based catalysis; rejects L-amino acids rather than detecting D-amino acids in the active site. By recycling D-aminoacyl-tRNA to D-amino acids and free tRNA molecules, this enzyme counteracts the toxicity associated with the formation of D-aminoacyl-tRNA entities in vivo and helps enforce protein L-homochirality. In Psychrobacter cryohalolentis (strain ATCC BAA-1226 / DSM 17306 / VKM B-2378 / K5), this protein is D-aminoacyl-tRNA deacylase.